Consider the following 239-residue polypeptide: Adapter protein MecA (239 aa).

A compositionally biased stretch (basic and acidic residues) spans 118–128 (EQRTKEKEAQG). The tract at residues 118-137 (EQRTKEKEAQGSKRQKSSAR) is disordered.

The protein belongs to the MecA family. In terms of assembly, homodimer.

In terms of biological role, enables the recognition and targeting of unfolded and aggregated proteins to the ClpC protease or to other proteins involved in proteolysis. The chain is Adapter protein MecA from Staphylococcus aureus (strain JH1).